The following is a 1071-amino-acid chain: Carbamoyl phosphate synthase large chain (1071 aa).

Residues 1–403 (MPKRTDLKSI…SFQKALRGLE (403 aa)) are carboxyphosphate synthetic domain. ATP contacts are provided by Arg-129, Arg-169, Gly-175, Gly-176, Gln-208, Val-210, Glu-215, Gly-241, Val-242, His-243, Gln-285, and Glu-299. One can recognise an ATP-grasp 1 domain in the interval 133-328 (KEAMEKIGLS…IAKVAAKLAV (196 aa)). Mg(2+) contacts are provided by Gln-285, Glu-299, and Asn-301. Gln-285, Glu-299, and Asn-301 together coordinate Mn(2+). Positions 404 to 548 (TGLCGFNPRS…YSTYEEECEA (145 aa)) are oligomerization domain. The interval 549–930 (RPSDRKKVMI…AYYKAQLGAG (382 aa)) is carbamoyl phosphate synthetic domain. The ATP-grasp 2 domain maps to 673–864 (QKVLNDLGLR…LAKVGARCMA (192 aa)). Residues Arg-709, Phe-748, Leu-750, Glu-755, Gly-780, Ile-781, His-782, Ser-783, Gln-823, and Glu-835 each contribute to the ATP site. Mg(2+) contacts are provided by Gln-823, Glu-835, and Asn-837. Residues Gln-823, Glu-835, and Asn-837 each contribute to the Mn(2+) site. The MGS-like domain occupies 931–1071 (ERLNPTGKIF…ELHGRLKNRS (141 aa)). An allosteric domain region spans residues 931-1071 (ERLNPTGKIF…ELHGRLKNRS (141 aa)).

It belongs to the CarB family. In terms of assembly, composed of two chains; the small (or glutamine) chain promotes the hydrolysis of glutamine to ammonia, which is used by the large (or ammonia) chain to synthesize carbamoyl phosphate. Tetramer of heterodimers (alpha,beta)4. The cofactor is Mg(2+). Mn(2+) is required as a cofactor.

It catalyses the reaction hydrogencarbonate + L-glutamine + 2 ATP + H2O = carbamoyl phosphate + L-glutamate + 2 ADP + phosphate + 2 H(+). It carries out the reaction hydrogencarbonate + NH4(+) + 2 ATP = carbamoyl phosphate + 2 ADP + phosphate + 2 H(+). Its pathway is amino-acid biosynthesis; L-arginine biosynthesis; carbamoyl phosphate from bicarbonate: step 1/1. It functions in the pathway pyrimidine metabolism; UMP biosynthesis via de novo pathway; (S)-dihydroorotate from bicarbonate: step 1/3. Functionally, large subunit of the glutamine-dependent carbamoyl phosphate synthetase (CPSase). CPSase catalyzes the formation of carbamoyl phosphate from the ammonia moiety of glutamine, carbonate, and phosphate donated by ATP, constituting the first step of 2 biosynthetic pathways, one leading to arginine and/or urea and the other to pyrimidine nucleotides. The large subunit (synthetase) binds the substrates ammonia (free or transferred from glutamine from the small subunit), hydrogencarbonate and ATP and carries out an ATP-coupled ligase reaction, activating hydrogencarbonate by forming carboxy phosphate which reacts with ammonia to form carbamoyl phosphate. This is Carbamoyl phosphate synthase large chain from Neisseria meningitidis serogroup A / serotype 4A (strain DSM 15465 / Z2491).